Here is a 421-residue protein sequence, read N- to C-terminus: Tyrosine--tRNA ligase (421 aa).

Tyr-36 is a binding site for L-tyrosine. The 'HIGH' region signature appears at 41 to 50 (PTADSLHIGH). Tyr-170 and Gln-174 together coordinate L-tyrosine. The 'KMSKS' region motif lies at 231-235 (KFGKS). Lys-234 is an ATP binding site. One can recognise an S4 RNA-binding domain in the interval 353-420 (TNIVEALIET…KKKYFMVNYQ (68 aa)).

Belongs to the class-I aminoacyl-tRNA synthetase family. TyrS type 1 subfamily. In terms of assembly, homodimer.

Its subcellular location is the cytoplasm. The enzyme catalyses tRNA(Tyr) + L-tyrosine + ATP = L-tyrosyl-tRNA(Tyr) + AMP + diphosphate + H(+). In terms of biological role, catalyzes the attachment of tyrosine to tRNA(Tyr) in a two-step reaction: tyrosine is first activated by ATP to form Tyr-AMP and then transferred to the acceptor end of tRNA(Tyr). This Staphylococcus epidermidis (strain ATCC 35984 / DSM 28319 / BCRC 17069 / CCUG 31568 / BM 3577 / RP62A) protein is Tyrosine--tRNA ligase.